The chain runs to 372 residues: Fatty acid conjugase FAC2 B (372 aa).

2 helical membrane passes run 44 to 64 and 74 to 94; these read YFLF…SNYI and IVWP…WMIG. The Histidine box-1 motif lies at 95 to 99; sequence HECGH. The Histidine box-2 motif lies at 131–135; sequence HRNHH. Helical transmembrane passes span 166 to 186, 217 to 237, and 240 to 260; these read IGLM…YIMF, VLFS…IVTV, and AMPA…ILFA. Positions 304–308 match the Histidine box-3 motif; that stretch reads HVIHH.

Belongs to the fatty acid desaturase type 1 family. In terms of tissue distribution, expressed exclusively in the developing seeds. Not detected in leaves.

It localises to the microsome membrane. The enzyme catalyses a (9Z,12Z)-octadecadienoyl-containing glycerolipid + AH2 + O2 = a (8E,10E,12Z)-octadecatrienoyl-containing glycerolipid + A + 2 H2O. The protein operates within lipid metabolism; polyunsaturated fatty acid biosynthesis. In terms of biological role, fatty acid conjugase converting 18:2(9Z, 12Z) to calendic acid 18:3(8E, 10E, 12Z). Converts alpha-linolenic acid (18:3(9Z, 12Z, 15Z)) into 18:4(8E, 10E, 12Z, 15Z). Also has weak activity on the mono-unsaturates 16:1(9Z) and 18:1(9Z) producing two conjugated double bonds at delta(8) and delta(10) position. This chain is Fatty acid conjugase FAC2 B, found in Calendula officinalis (Pot marigold).